The chain runs to 188 residues: Ribosome maturation factor RimM (188 aa).

One can recognise a PRC barrel domain in the interval 96–169; the sequence is DDEFYYADLE…RILIDPMAAG (74 aa).

Belongs to the RimM family. As to quaternary structure, binds ribosomal protein uS19.

The protein resides in the cytoplasm. Its function is as follows. An accessory protein needed during the final step in the assembly of 30S ribosomal subunit, possibly for assembly of the head region. Essential for efficient processing of 16S rRNA. May be needed both before and after RbfA during the maturation of 16S rRNA. It has affinity for free ribosomal 30S subunits but not for 70S ribosomes. In Agrobacterium fabrum (strain C58 / ATCC 33970) (Agrobacterium tumefaciens (strain C58)), this protein is Ribosome maturation factor RimM.